We begin with the raw amino-acid sequence, 146 residues long: MLALIQRVTRASVTVDDRIVGQIGPGLLALIGVEPGDRDAQTRRLAERLLSYRVFSDDAGKMNRSLTDTNGGLLLVSQFTLAADTSSGNRPGFSTAAPPEEAERAFNQLVDICREKHRGGVETGRFGAHMVVDLVNDGPVTFLLRP.

Residues 138 to 139 carry the Gly-cisPro motif, important for rejection of L-amino acids motif; it reads GP.

It belongs to the DTD family. Homodimer.

Its subcellular location is the cytoplasm. It catalyses the reaction glycyl-tRNA(Ala) + H2O = tRNA(Ala) + glycine + H(+). The catalysed reaction is a D-aminoacyl-tRNA + H2O = a tRNA + a D-alpha-amino acid + H(+). Its function is as follows. An aminoacyl-tRNA editing enzyme that deacylates mischarged D-aminoacyl-tRNAs. Also deacylates mischarged glycyl-tRNA(Ala), protecting cells against glycine mischarging by AlaRS. Acts via tRNA-based rather than protein-based catalysis; rejects L-amino acids rather than detecting D-amino acids in the active site. By recycling D-aminoacyl-tRNA to D-amino acids and free tRNA molecules, this enzyme counteracts the toxicity associated with the formation of D-aminoacyl-tRNA entities in vivo and helps enforce protein L-homochirality. This Xanthomonas oryzae pv. oryzae (strain MAFF 311018) protein is D-aminoacyl-tRNA deacylase.